The sequence spans 51 residues: Large ribosomal subunit protein eL39 (51 aa).

Belongs to the eukaryotic ribosomal protein eL39 family. Interacts with YIH1.

This Kluyveromyces marxianus (Yeast) protein is Large ribosomal subunit protein eL39 (RPL39).